The primary structure comprises 1002 residues: uncharacterized protein (1002 aa).

This is an uncharacterized protein from Fiji disease virus (isolate Sugarcane) (FDV).